The primary structure comprises 66 residues: Large ribosomal subunit protein bL28 (66 aa).

The disordered stretch occupies residues 1–26; it reads MAKDAITGARTRFGNQRSHALNSSRR. Polar residues predominate over residues 13 to 25; the sequence is FGNQRSHALNSSR.

It belongs to the bacterial ribosomal protein bL28 family.

The polypeptide is Large ribosomal subunit protein bL28 (Leuconostoc citreum (strain KM20)).